We begin with the raw amino-acid sequence, 535 residues long: Dual specificity calcium/calmodulin-dependent 3',5'-cyclic nucleotide phosphodiesterase 1B (535 aa).

A disordered region spans residues 1–21 (MELSPRSPPEMLESDCPSPLE). 2 positions are modified to phosphoserine: Ser-7 and Ser-14. Calmodulin-binding stretches follow at residues 27 to 47 (SKKM…QLEN) and 117 to 140 (EKPK…MFRR). The region spanning 145 to 502 (VGPTYSTAVH…QKWKERAASG (358 aa)) is the PDEase domain. His-222 serves as the catalytic Proton donor. Residues His-226, His-262, Asp-263, and Asp-369 each coordinate Zn(2+). Asp-263 serves as a coordination point for Mg(2+). Disordered regions lie at residues 445-474 (PLTD…GDPN) and 495-535 (WKER…GNLD). The span at 454–463 (KSQPSFQWRQ) shows a compositional bias: polar residues. Phosphoserine is present on residues Ser-465 and Ser-513.

Belongs to the cyclic nucleotide phosphodiesterase family. PDE1 subfamily. As to quaternary structure, homodimer. The cofactor is Zn(2+). It depends on Mg(2+) as a cofactor. In terms of tissue distribution, expressed in brain.

The protein localises to the cytoplasm. It localises to the cytosol. It carries out the reaction a nucleoside 3',5'-cyclic phosphate + H2O = a nucleoside 5'-phosphate + H(+). It catalyses the reaction 3',5'-cyclic GMP + H2O = GMP + H(+). The catalysed reaction is 3',5'-cyclic AMP + H2O = AMP + H(+). Its activity is regulated as follows. Type I PDE are activated by the binding of calmodulin in the presence of Ca(2+). Functionally, cyclic nucleotide phosphodiesterase with a dual specificity for the second messengers cAMP and cGMP, which are key regulators of many important physiological processes. Has a preference for cGMP as a substrate. The chain is Dual specificity calcium/calmodulin-dependent 3',5'-cyclic nucleotide phosphodiesterase 1B from Rattus norvegicus (Rat).